Reading from the N-terminus, the 149-residue chain is UPF0251 protein Moth_1655 (149 aa).

The segment at 129–149 is disordered; sequence AGRGPGRGRCHRHGRFGEGEH.

Belongs to the UPF0251 family.

This Moorella thermoacetica (strain ATCC 39073 / JCM 9320) protein is UPF0251 protein Moth_1655.